We begin with the raw amino-acid sequence, 230 residues long: Lipoprotein-releasing system ATP-binding protein LolD (230 aa).

In terms of domain architecture, ABC transporter spans 6-230 (LQVQAVSKSY…GYLQVPESAQ (225 aa)). 42 to 49 (GTSGSGKS) contacts ATP.

It belongs to the ABC transporter superfamily. Lipoprotein translocase (TC 3.A.1.125) family. In terms of assembly, the complex is composed of two ATP-binding proteins (LolD) and two transmembrane proteins (LolC and LolE).

The protein resides in the cell inner membrane. Functionally, part of the ABC transporter complex LolCDE involved in the translocation of mature outer membrane-directed lipoproteins, from the inner membrane to the periplasmic chaperone, LolA. Responsible for the formation of the LolA-lipoprotein complex in an ATP-dependent manner. The sequence is that of Lipoprotein-releasing system ATP-binding protein LolD from Shewanella oneidensis (strain ATCC 700550 / JCM 31522 / CIP 106686 / LMG 19005 / NCIMB 14063 / MR-1).